The sequence spans 93 residues: Neurophysin 1 (93 aa).

7 cysteine pairs are disulfide-bonded: C10/C54, C13/C27, C21/C44, C28/C34, C61/C74, C68/C86, and C75/C80.

This sequence belongs to the vasopressin/oxytocin family.

Its function is as follows. Neurophysin 1 specifically binds oxytocin. This is Neurophysin 1 from Struthio camelus (Common ostrich).